The primary structure comprises 208 residues: Small ribosomal subunit protein bS6 (208 aa).

Disordered regions lie at residues 121-143 (SENN…KPRL) and 185-208 (NQQT…GAKP). Over residues 185-195 (NQQTSQANNNQ) the composition is skewed to low complexity.

This sequence belongs to the bacterial ribosomal protein bS6 family.

Binds together with bS18 to 16S ribosomal RNA. The chain is Small ribosomal subunit protein bS6 (rpsF) from Mycoplasma genitalium (strain ATCC 33530 / DSM 19775 / NCTC 10195 / G37) (Mycoplasmoides genitalium).